The primary structure comprises 535 residues: Ribonuclease Y 2 (535 aa).

Residues 1-21 (MLITGLIIGCLLIGLVIGYVV) traverse the membrane as a helical segment. Residues 207 to 268 (LEHTVTVPNG…IRREVARVAL (62 aa)) form the KH domain. The HD domain maps to 334 to 427 (VLLHSIEVAQ…VAAADAISGA (94 aa)).

This sequence belongs to the RNase Y family.

The protein resides in the cell membrane. Its function is as follows. Endoribonuclease that initiates mRNA decay. This Levilactobacillus brevis (strain ATCC 367 / BCRC 12310 / CIP 105137 / JCM 1170 / LMG 11437 / NCIMB 947 / NCTC 947) (Lactobacillus brevis) protein is Ribonuclease Y 2.